We begin with the raw amino-acid sequence, 463 residues long: Interferon-inducible GTPase 5 (463 aa).

In terms of domain architecture, IRG-type G spans 53 to 235; it reads IRLEVGVTGE…PTLVSTWEHD (183 aa). Residues 62-69, 87-91, 169-171, and 216-218 each bind GTP; these read ESGAGKSS, TGVME, KVD, and SNL. 2 positions are modified to phosphoserine: S247 and S304. Positions 404-437 are disordered; that stretch reads LEDDEPQPEVSLEVASDNGVEKGGSGEGGGEEAP.

It belongs to the TRAFAC class dynamin-like GTPase superfamily. IRG family. In terms of tissue distribution, abundantly expressed in semen (at protein level).

It localises to the cell projection. The protein localises to the cilium. The protein resides in the flagellum. It is found in the lipid droplet. The catalysed reaction is GTP + H2O = GDP + phosphate + H(+). Its function is as follows. Required for sperm motility and therefore male fertility, via positive regulation of spermatozoa fibrous sheath formation. The protein is Interferon-inducible GTPase 5 of Homo sapiens (Human).